We begin with the raw amino-acid sequence, 405 residues long: L-rhamnonate dehydratase (405 aa).

Substrate-binding residues include histidine 33 and arginine 59. Mg(2+)-binding residues include aspartate 226, glutamate 252, and glutamate 280. Histidine 329 (proton acceptor) is an active-site residue. Glutamate 349 provides a ligand contact to substrate.

Belongs to the mandelate racemase/muconate lactonizing enzyme family. RhamD subfamily. In terms of assembly, homooctamer; tetramer of dimers. It depends on Mg(2+) as a cofactor.

The catalysed reaction is L-rhamnonate = 2-dehydro-3-deoxy-L-rhamnonate + H2O. In terms of biological role, catalyzes the dehydration of L-rhamnonate to 2-keto-3-deoxy-L-rhamnonate (KDR). The sequence is that of L-rhamnonate dehydratase from Shigella boydii serotype 4 (strain Sb227).